The sequence spans 473 residues: Adenosylhomocysteinase (473 aa).

Residues 58-62, Asp135, and Glu197 contribute to the substrate site; that span reads HMTIQ. Position 198–200 (198–200) interacts with NAD(+); the sequence is TTT. Residues Lys227 and Asp231 each coordinate substrate. Residues Asn232, Val265, Glu284, Asn319, 340–342, and Asn385 each bind NAD(+); that span reads IGH. His342 serves as a coordination point for substrate. His392 contacts substrate. NAD(+) contacts are provided by Lys467 and Tyr471.

It belongs to the adenosylhomocysteinase family. As to quaternary structure, homotetramer; dimer of dimers. Requires NAD(+) as cofactor.

The protein resides in the cytoplasm. The enzyme catalyses S-adenosyl-L-homocysteine + H2O = L-homocysteine + adenosine. The protein operates within amino-acid biosynthesis; L-homocysteine biosynthesis; L-homocysteine from S-adenosyl-L-homocysteine: step 1/1. Functionally, may play a key role in the regulation of the intracellular concentration of adenosylhomocysteine, which is a strong inhibitor of SAM-dependent methyltransferases. Catalyzes the hydrolysis of S-adenosyl-L-homocysteine into L-homocysteine and adenosine. This is Adenosylhomocysteinase from Bradyrhizobium elkanii.